The sequence spans 366 residues: MSAPRHDLADFVTAQWQRRGWFAWLMLPFSLLFGLIARVRRYGYLHGWFKSTRLPMPVIVVGNVTVGGTGKTPAVIALAQALTEAGLRPGVVSRGYGVTLKHPRRVKPTSKASDVGDEPLLIARAADVPVWVFPDRALCAQTMLVSHPGVNVLLLDDGLQHYRLQRDFEIVMFDSRMGGNGLMLPAGPLREPLSRPRDATLINDPNFRATPERPDVYGMRLDLDEAWQLNDPTMARPVSAFAGRRVLAAAGIGNPERFFASLRGAGLSPKTLPLPDHYDFAEDPFAGNPDALDADVILITEKDAVKCERFDDPRIWVVPTTPVIDAGLIDKIRRAVLARVPAAKSTPASGGATGLNKEHQDGQPAA.

65 to 72 (TVGGTGKT) lines the ATP pocket. Positions 343 to 366 (AKSTPASGGATGLNKEHQDGQPAA) are disordered. Positions 356-366 (NKEHQDGQPAA) are enriched in basic and acidic residues.

The protein belongs to the LpxK family.

It catalyses the reaction a lipid A disaccharide + ATP = a lipid IVA + ADP + H(+). Its pathway is glycolipid biosynthesis; lipid IV(A) biosynthesis; lipid IV(A) from (3R)-3-hydroxytetradecanoyl-[acyl-carrier-protein] and UDP-N-acetyl-alpha-D-glucosamine: step 6/6. Transfers the gamma-phosphate of ATP to the 4'-position of a tetraacyldisaccharide 1-phosphate intermediate (termed DS-1-P) to form tetraacyldisaccharide 1,4'-bis-phosphate (lipid IVA). The polypeptide is Tetraacyldisaccharide 4'-kinase (Cupriavidus pinatubonensis (strain JMP 134 / LMG 1197) (Cupriavidus necator (strain JMP 134))).